The sequence spans 123 residues: MPTINQLIRKPREAQKARDKAPALQASPQKRGVCTRVYTTTPKKPNSALRKVAKVRLTNSYEVIGYIPGEGHNLQEHSVVMIRGGRVKDLPGVRYHILRGVLDTQGVKNRKQRRSKYGAKRPK.

Residues 1 to 31 form a disordered region; that stretch reads MPTINQLIRKPREAQKARDKAPALQASPQKR. Positions 10-21 are enriched in basic and acidic residues; that stretch reads KPREAQKARDKA. Asp89 bears the 3-methylthioaspartic acid mark.

This sequence belongs to the universal ribosomal protein uS12 family. In terms of assembly, part of the 30S ribosomal subunit. Contacts proteins S8 and S17. May interact with IF1 in the 30S initiation complex.

Its function is as follows. With S4 and S5 plays an important role in translational accuracy. In terms of biological role, interacts with and stabilizes bases of the 16S rRNA that are involved in tRNA selection in the A site and with the mRNA backbone. Located at the interface of the 30S and 50S subunits, it traverses the body of the 30S subunit contacting proteins on the other side and probably holding the rRNA structure together. The combined cluster of proteins S8, S12 and S17 appears to hold together the shoulder and platform of the 30S subunit. This is Small ribosomal subunit protein uS12 from Xanthobacter autotrophicus (strain ATCC BAA-1158 / Py2).